A 219-amino-acid polypeptide reads, in one-letter code: MATPWSLTAVEVDNVVFPPAVKPPSSADTFFLGGAGVRGLQIEDKFVKFTAIGIYLHDDALPFLAAKWNGKSDHELTESVEFFRDIVTGPFEKFMQVTMILPLTGQQYSEKVSENCVAIWKSLGIYTDAEAKAIDKFVSVFKDETFPPGSSILFTVSPKGSLGITFSKDGSTTTVIENKLLSEAVLESMIGKHGVSPAAKQSLASRLSGLFKAGGDTDK.

Substrate is bound by residues Thr-50, Asn-115, and Ser-188.

It belongs to the chalcone isomerase family.

The catalysed reaction is a chalcone = a flavanone.. It functions in the pathway secondary metabolite biosynthesis; flavonoid biosynthesis. Catalyzes the intramolecular cyclization of bicyclic chalcones into tricyclic (S)-flavanones. Responsible for the isomerization of 4,2',4',6'-tetrahydroxychalcone (also termed chalcone) into naringenin. This chain is Chalcone--flavanone isomerase (CHI), found in Clitoria ternatea (Butterfly pea).